The primary structure comprises 235 residues: Orotidine 5'-phosphate decarboxylase (235 aa).

Substrate contacts are provided by residues Asp-9, Lys-31, 58 to 67 (DLKFHDIPNT), Thr-121, Arg-180, Gln-190, Gly-210, and Arg-211. Catalysis depends on Lys-60, which acts as the Proton donor.

Belongs to the OMP decarboxylase family. Type 1 subfamily. In terms of assembly, homodimer.

It catalyses the reaction orotidine 5'-phosphate + H(+) = UMP + CO2. The protein operates within pyrimidine metabolism; UMP biosynthesis via de novo pathway; UMP from orotate: step 2/2. Its function is as follows. Catalyzes the decarboxylation of orotidine 5'-monophosphate (OMP) to uridine 5'-monophosphate (UMP). This Nitratidesulfovibrio vulgaris (strain ATCC 29579 / DSM 644 / CCUG 34227 / NCIMB 8303 / VKM B-1760 / Hildenborough) (Desulfovibrio vulgaris) protein is Orotidine 5'-phosphate decarboxylase.